Consider the following 853-residue polypeptide: Stachyose synthase (853 aa).

Residues 1-11 (MAPPLNSTTSN) constitute a propeptide that is removed on maturation.

This sequence belongs to the glycosyl hydrolases 36 family.

Its subcellular location is the cytoplasm. It catalyses the reaction alpha-D-galactosyl-(1-&gt;3)-1D-myo-inositol + raffinose = stachyose + myo-inositol. It participates in glycan metabolism; stachyose biosynthesis; stachyose from raffinose: step 1/1. Catalyzes stachyose synthesis by transfer of a galactosyl moiety from galactinol to raffinose. Also catalyzes verbascose synthesis by galactosyl transfer from galactinol to stachyose or from one stachyose molecule to another. Oligosaccharides of the raffinose family play a protective role in maturation drying of seeds. They may act as cryoprotectants in frost-hardy plants. The polypeptide is Stachyose synthase (STS1) (Pisum sativum (Garden pea)).